Reading from the N-terminus, the 378-residue chain is B3 domain-containing protein Os03g0622200 (378 aa).

Positions 29 to 124 form a DNA-binding region, TF-B3 1; it reads SKHFLKHMVG…SFDVLIFDPS (96 aa). Positions 140 to 159 are disordered; it reads GRAENSAGAEQGGRNGRRTP. The TF-B3 2 DNA-binding region spans 256-370; it reads FVQVIHSSHV…TMTVHVLRRV (115 aa).

Its subcellular location is the nucleus. The protein is B3 domain-containing protein Os03g0622200 of Oryza sativa subsp. japonica (Rice).